The sequence spans 583 residues: Pescadillo (583 aa).

The stretch at 275–329 forms a coiled coil; the sequence is EKLSALSASLARMVASVEEEEAELDHFPTEGEDQEKMEVREKMEQQQSKQKKLFE. The region spanning 323-416 is the BRCT domain; that stretch reads KQKKLFEGLK…IQLPVEEYFL (94 aa). Disordered stretches follow at residues 448-526 and 558-583; these read RGEK…EEKA and ANKLAAKRKAHDDASKADKKKKKKKC. Residues 455–489 show a composition bias toward acidic residues; it reads EEDEEEEGEEEEDDEEDEEDDEQSEDEEEAEEEAN. Residues 512–526 are compositionally biased toward basic and acidic residues; that stretch reads AKAENRARAAEEEKA.

Belongs to the pescadillo family. As to quaternary structure, component of the PeBoW complex, composed of bop1, pes1 and wdr12. The complex is held together by bop1, which interacts with pes1 via its N-terminal domain and with wdr12 via a high-affinity interaction between the seven-bladed beta-propeller domains of the 2 proteins. The PeBoW complex associates with the 66S pre-ribosome.

Its subcellular location is the nucleus. The protein localises to the nucleolus. It localises to the nucleoplasm. Functionally, component of the PeBoW complex, which is required for maturation of 28S and 5.8S ribosomal RNAs and formation of the 60S ribosome. The protein is Pescadillo (pes) of Danio rerio (Zebrafish).